The following is a 198-amino-acid chain: Na(+)-translocating NADH-quinone reductase subunit E (198 aa).

Helical transmembrane passes span 11-31 (SIFI…FLAV), 39-59 (FGLG…NNLV), 77-97 (FLNF…LEMV), 110-130 (GIFL…SFMV), 140-160 (IVYG…LAGI), and 176-196 (LGIT…FSGV).

Belongs to the NqrDE/RnfAE family. Composed of six subunits; NqrA, NqrB, NqrC, NqrD, NqrE and NqrF. Post-translationally, the N-terminus is blocked.

It is found in the cell inner membrane. The catalysed reaction is a ubiquinone + n Na(+)(in) + NADH + H(+) = a ubiquinol + n Na(+)(out) + NAD(+). With respect to regulation, this reaction is tightly coupled to the Na(+) pumping activity and specifically requires Na(+) for activity. Inhibited by korormicin and 2-N-heptyl-4-hydroxyquinoline N-oxide (HQNO). NQR complex catalyzes the reduction of ubiquinone-1 to ubiquinol by two successive reactions, coupled with the transport of Na(+) ions from the cytoplasm to the periplasm. NqrA to NqrE are probably involved in the second step, the conversion of ubisemiquinone to ubiquinol. In Vibrio alginolyticus, this protein is Na(+)-translocating NADH-quinone reductase subunit E.